The chain runs to 322 residues: DNA primase small subunit PriS (322 aa).

Residues Asp-86, Asp-88, and Asp-226 contribute to the active site.

The protein belongs to the eukaryotic-type primase small subunit family. Heterodimer of a small subunit (PriS) and a large subunit (PriL). Requires Mg(2+) as cofactor. Mn(2+) serves as cofactor.

Its function is as follows. Catalytic subunit of DNA primase, an RNA polymerase that catalyzes the synthesis of short RNA molecules used as primers for DNA polymerase during DNA replication. The small subunit contains the primase catalytic core and has DNA synthesis activity on its own. Binding to the large subunit stabilizes and modulates the activity, increasing the rate of DNA synthesis while decreasing the length of the DNA fragments, and conferring RNA synthesis capability. The DNA polymerase activity may enable DNA primase to also catalyze primer extension after primer synthesis. May also play a role in DNA repair. This chain is DNA primase small subunit PriS, found in Thermoplasma acidophilum (strain ATCC 25905 / DSM 1728 / JCM 9062 / NBRC 15155 / AMRC-C165).